Reading from the N-terminus, the 2364-residue chain is Actin-binding protein F (2364 aa).

The segment covering 138-157 (THQTSPTTETTTTPSSSSSS) has biased composition (low complexity). Disordered stretches follow at residues 138–168 (THQT…STLD), 1087–1111 (QASK…EKRR), 1412–1435 (NNNS…RAPM), and 1929–2088 (KLIS…SEFN). The span at 1092 to 1111 (NESEVKDEKSMRNRQVEKRR) shows a compositional bias: basic and acidic residues. 2 stretches are compositionally biased toward low complexity: residues 1412 to 1428 (NNNS…NSFG) and 1932 to 1960 (SSST…TTTD). Positions 1960–2017 (DSSKDKKKLEKEEKQREKERKQKEKEDKKREKEELKKKEKEEKKKKEEEKKLKKKSGS) form a coiled coil. Over residues 1961-2010 (SSKDKKKLEKEEKQREKERKQKEKEDKKREKEELKKKEKEEKKKKEEEKK) the composition is skewed to basic and acidic residues. The segment covering 2027-2047 (ATPTTTTTTEATTTTTTTTAT) has biased composition (low complexity). Positions 2052–2070 (IKPEKIASDDEHDDHHHDE) are enriched in basic and acidic residues. Residues 2071–2081 (HDEEDDDDEPL) are compositionally biased toward acidic residues. Residues 2129–2173 (VQRWNSLFKDLRNKVDQVSNKDSVEIDYEKEIDRERRQNKMASNE) are a coiled coil.

Interacts with actin.

It is found in the nucleus. Its subcellular location is the cytoplasm. It localises to the cytoskeleton. In Dictyostelium discoideum (Social amoeba), this protein is Actin-binding protein F (abpF).